We begin with the raw amino-acid sequence, 344 residues long: DNA-directed RNA polymerase subunit alpha (344 aa).

The alpha N-terminal domain (alpha-NTD) stretch occupies residues 1-246 (MPMERFLKDF…EFLFPLVDFE (246 aa)). Residues 259-344 (ESSNLLDMSI…VLSKNVKISE (86 aa)) are alpha C-terminal domain (alpha-CTD).

It belongs to the RNA polymerase alpha chain family. As to quaternary structure, homodimer. The RNAP catalytic core consists of 2 alpha, 1 beta, 1 beta' and 1 omega subunit. When a sigma factor is associated with the core the holoenzyme is formed, which can initiate transcription.

The catalysed reaction is RNA(n) + a ribonucleoside 5'-triphosphate = RNA(n+1) + diphosphate. Functionally, DNA-dependent RNA polymerase catalyzes the transcription of DNA into RNA using the four ribonucleoside triphosphates as substrates. The sequence is that of DNA-directed RNA polymerase subunit alpha from Borreliella afzelii (strain PKo) (Borrelia afzelii).